Here is a 178-residue protein sequence, read N- to C-terminus: ATP synthase subunit delta (178 aa).

Belongs to the ATPase delta chain family. In terms of assembly, F-type ATPases have 2 components, F(1) - the catalytic core - and F(0) - the membrane proton channel. F(1) has five subunits: alpha(3), beta(3), gamma(1), delta(1), epsilon(1). F(0) has three main subunits: a(1), b(2) and c(10-14). The alpha and beta chains form an alternating ring which encloses part of the gamma chain. F(1) is attached to F(0) by a central stalk formed by the gamma and epsilon chains, while a peripheral stalk is formed by the delta and b chains.

Its subcellular location is the cell membrane. Its function is as follows. F(1)F(0) ATP synthase produces ATP from ADP in the presence of a proton or sodium gradient. F-type ATPases consist of two structural domains, F(1) containing the extramembraneous catalytic core and F(0) containing the membrane proton channel, linked together by a central stalk and a peripheral stalk. During catalysis, ATP synthesis in the catalytic domain of F(1) is coupled via a rotary mechanism of the central stalk subunits to proton translocation. Functionally, this protein is part of the stalk that links CF(0) to CF(1). It either transmits conformational changes from CF(0) to CF(1) or is implicated in proton conduction. This is ATP synthase subunit delta from Streptococcus agalactiae serotype V (strain ATCC BAA-611 / 2603 V/R).